Here is a 192-residue protein sequence, read N- to C-terminus: Probable Brix domain-containing ribosomal biogenesis protein (192 aa).

The region spanning 2–191 is the Brix domain; the sequence is RPAAITTSQR…DFRTKDERMK (190 aa).

In terms of biological role, probably involved in the biogenesis of the ribosome. This chain is Probable Brix domain-containing ribosomal biogenesis protein, found in Methanopyrus kandleri (strain AV19 / DSM 6324 / JCM 9639 / NBRC 100938).